A 464-amino-acid polypeptide reads, in one-letter code: Argininosuccinate lyase (464 aa).

The protein belongs to the lyase 1 family. Argininosuccinate lyase subfamily.

It is found in the cytoplasm. It catalyses the reaction 2-(N(omega)-L-arginino)succinate = fumarate + L-arginine. It participates in amino-acid biosynthesis; L-arginine biosynthesis; L-arginine from L-ornithine and carbamoyl phosphate: step 3/3. In Pseudomonas aeruginosa (strain UCBPP-PA14), this protein is Argininosuccinate lyase.